The sequence spans 653 residues: Alpha-L-iduronidase (653 aa).

Residues 1 to 27 (MRPLRPRAALLALLASLLAAPPVAPAE) form the signal peptide. The alpha-D-mannopyranose site is built by P54, L56, and H58. An alpha-L-iduronate-binding site is contributed by H91. N-linked (GlcNAc...) asparagine glycosylation is present at N110. Alpha-L-iduronate-binding residues include N181 and E182. E182 functions as the Proton donor in the catalytic mechanism. N190 carries an N-linked (GlcNAc...) asparagine glycan. K264, E299, and G305 together coordinate alpha-L-iduronate. The active-site Nucleophile is the E299. An alpha-D-mannopyranose-binding site is contributed by W306. N-linked (GlcNAc...) asparagine glycosylation occurs at N336. 2 residues coordinate alpha-L-iduronate: D349 and R363. N-linked (GlcNAc...) asparagine glycans are attached at residues N372, N415, and N451. The alpha-D-mannopyranose site is built by R488 and R492. Position 492 (R492) interacts with beta-D-mannose. C541 and C577 form a disulfide bridge.

It belongs to the glycosyl hydrolase 39 family. Monomer. Post-translationally, N-glycosylation at Asn-372 contributes to substrate binding and is required for full enzymatic activity. Ubiquitous.

It localises to the lysosome. It carries out the reaction Hydrolysis of unsulfated alpha-L-iduronosidic linkages in dermatan sulfate.. This is Alpha-L-iduronidase (IDUA) from Homo sapiens (Human).